Here is a 661-residue protein sequence, read N- to C-terminus: Fusaric acid cluster transcription factor FUB12 (661 aa).

Residues 17 to 48 (CVPCRTRKIKCNAAVVGLPCGSCVSRECPDEC) constitute a DNA-binding region (zn(2)-C6 fungal-type). Disordered regions lie at residues 57-131 (TVKG…RPPG) and 151-185 (SAAQ…QLDD). Residues 73 to 98 (PDTNGSILSPRQQQLPTNVSRQTTDS) are compositionally biased toward polar residues. Positions 99-109 (SHSDPVEESIH) are enriched in basic and acidic residues. Residues 110 to 119 (ASHTGSSLRN) show a composition bias toward polar residues. Residues 120-129 (DTPHSRDRRP) are compositionally biased toward basic and acidic residues.

It is found in the nucleus. Its function is as follows. Transcription factor that is involved in the formation of the two Fusaric acid derivatives, dehydrofusaric acid and fusarinolic acid, serving as a detoxification mechanism. The chain is Fusaric acid cluster transcription factor FUB12 from Gibberella fujikuroi (strain CBS 195.34 / IMI 58289 / NRRL A-6831) (Bakanae and foot rot disease fungus).